Reading from the N-terminus, the 236-residue chain is Small ribosomal subunit protein uS2c (236 aa).

This sequence belongs to the universal ribosomal protein uS2 family.

It is found in the plastid. This Cuscuta obtusiflora (Peruvian dodder) protein is Small ribosomal subunit protein uS2c (rps2).